The following is a 446-amino-acid chain: Sorting nexin-30 (446 aa).

A compositionally biased stretch (polar residues) spans 1–18 (MSGSSTPKSLPTSGQQSL). The segment at 1–84 (MSGSSTPKSL…SSPASSSSLL (84 aa)) is disordered. Positions 70-84 (TPADTSSPASSSSLL) are enriched in low complexity. Residues 98–219 (RDLFVTVDDP…VFLTAKDLNS (122 aa)) form the PX domain. Residues arginine 141, glutamine 143, lysine 171, and arginine 185 each coordinate a 1,2-diacyl-sn-glycero-3-phospho-(1D-myo-inositol-3-phosphate). One can recognise a BAR domain in the interval 243-446 (KLRNRPVEFA…PLLQDKQEPK (204 aa)).

This sequence belongs to the sorting nexin family.

It is found in the early endosome membrane. Involved in the regulation of endocytosis and in several stages of intracellular trafficking. Together with snx4, involved in autophagosome assembly. This chain is Sorting nexin-30 (snx30), found in Xenopus tropicalis (Western clawed frog).